The primary structure comprises 338 residues: Bifunctional methylenetetrahydrofolate dehydrogenase/cyclohydrolase 2, mitochondrial (338 aa).

Substrate contacts are provided by residues 89–93 (YVRNK) and 136–138 (VQL). NAD(+) is bound by residues 205–207 (GRS) and R238. A substrate-binding site is contributed by 314–318 (PGGVG).

Belongs to the tetrahydrofolate dehydrogenase/cyclohydrolase family. It depends on Mg(2+) as a cofactor. As to expression, widely expressed.

The protein resides in the mitochondrion inner membrane. It carries out the reaction (6R)-5,10-methylene-5,6,7,8-tetrahydrofolate + NAD(+) = (6R)-5,10-methenyltetrahydrofolate + NADH. The enzyme catalyses (6R)-5,10-methenyltetrahydrofolate + H2O = (6R)-10-formyltetrahydrofolate + H(+). It catalyses the reaction (6R)-5,10-methylene-5,6,7,8-tetrahydrofolate + NADP(+) = (6R)-5,10-methenyltetrahydrofolate + NADPH. The protein operates within one-carbon metabolism; tetrahydrofolate interconversion. Bifunctional mitochondrial folate-interconverting enzyme that has both NAD/NADP-dependent methylenetetrahydrofolate dehydrogenase and methenyltetrahydrofolate cyclohydrolase activities. This is Bifunctional methylenetetrahydrofolate dehydrogenase/cyclohydrolase 2, mitochondrial from Mus musculus (Mouse).